The chain runs to 1151 residues: Nardilysin (1151 aa).

A signal peptide spans 1 to 20 (MLRRVTVAAVCATRRKLCEA). 2 disordered regions span residues 53-108 (RNKA…KSPS) and 133-207 (MEGK…KKTT). A phosphoserine mark is found at Ser86, Ser94, and Ser96. Acidic residues predominate over residues 141-198 (TDDEEEEEVEEEEEDDDEDSGAEIEDDDEEGFDDEDEFDDEHDDDLDTEDNELEELEE). Residue His233 coordinates Zn(2+). The active-site Proton acceptor is Glu236. Zn(2+) contacts are provided by His237 and Glu314.

This sequence belongs to the peptidase M16 family. Interacts with BACE1 and NRG1. Zn(2+) is required as a cofactor. Primarily in adult heart, skeletal muscle, and testis and at much lower levels in other tissues.

The protein localises to the mitochondrion. Its subcellular location is the cell projection. It is found in the dendrite. The catalysed reaction is Hydrolysis of polypeptides, preferably at -Xaa-|-Arg-Lys-, and less commonly at -Arg-|-Arg-Xaa-, in which Xaa is not Arg or Lys.. In terms of biological role, cleaves peptide substrates on the N-terminus of arginine residues in dibasic pairs. Is a critical activator of BACE1- and ADAM17-mediated pro-neuregulin ectodomain shedding, involved in the positive regulation of axonal maturation and myelination. Required for proper functioning of 2-oxoglutarate dehydrogenase (OGDH). This is Nardilysin from Homo sapiens (Human).